A 518-amino-acid polypeptide reads, in one-letter code: Protein translocase subunit SecD (518 aa).

Helical transmembrane passes span 9 to 29, 361 to 381, 384 to 404, 406 to 426, 452 to 474, and 486 to 506; these read IFLSIICTVFAVICALPNFMQ, LIGFIAVCIFMVWSYGVLGLF, IALSLALLYILALLSLFQATL, LPGIAGIILTMGMAVDANVLI, FATILDSNLTTLIVAFLLYIFGV, and IGIISSMFSAIIITKLLIDIW.

Belongs to the SecD/SecF family. SecD subfamily. Forms a complex with SecF. Part of the essential Sec protein translocation apparatus which comprises SecA, SecYEG and auxiliary proteins SecDF-YajC and YidC.

The protein resides in the cell inner membrane. Its function is as follows. Part of the Sec protein translocase complex. Interacts with the SecYEG preprotein conducting channel. SecDF uses the proton motive force (PMF) to complete protein translocation after the ATP-dependent function of SecA. This Rickettsia felis (strain ATCC VR-1525 / URRWXCal2) (Rickettsia azadi) protein is Protein translocase subunit SecD.